A 360-amino-acid chain; its full sequence is Nicotinate-nucleotide--dimethylbenzimidazole phosphoribosyltransferase (360 aa).

Residue Glu327 is the Proton acceptor of the active site.

The protein belongs to the CobT family.

It catalyses the reaction 5,6-dimethylbenzimidazole + nicotinate beta-D-ribonucleotide = alpha-ribazole 5'-phosphate + nicotinate + H(+). It functions in the pathway nucleoside biosynthesis; alpha-ribazole biosynthesis; alpha-ribazole from 5,6-dimethylbenzimidazole: step 1/2. In terms of biological role, catalyzes the synthesis of alpha-ribazole-5'-phosphate from nicotinate mononucleotide (NAMN) and 5,6-dimethylbenzimidazole (DMB). The polypeptide is Nicotinate-nucleotide--dimethylbenzimidazole phosphoribosyltransferase (Shewanella baltica (strain OS223)).